A 196-amino-acid polypeptide reads, in one-letter code: MAEGSALLRGSSNHKVTLVTGNDGKRREVQACLEGHVLVENVNLDLPEMQSDSVFEISRNKALMAYDITKSPVLVEDTALCFDALGGLPGPYVKWFFERIGPTGLIKLLEGFDTRRAYATCVFTYCASPDVVLQFEGRCDGRIVEAPRGEGGFGWDSVFEPDEGCGQTFAEMQDEEKNRISPRAKALVALKAHFCL.

Position 20 to 25 (20 to 25 (TGNDGK)) interacts with ITP. E48 provides a ligand contact to Mg(2+). Residues K61, 77–78 (DT), K94, 153–156 (FGWD), K177, and 182–183 (PR) contribute to the ITP site.

The protein belongs to the HAM1 NTPase family. In terms of assembly, homodimer. Requires Mg(2+) as cofactor. It depends on Mn(2+) as a cofactor.

The protein resides in the cytoplasm. It catalyses the reaction ITP + H2O = IMP + diphosphate + H(+). It carries out the reaction dITP + H2O = dIMP + diphosphate + H(+). The enzyme catalyses XTP + H2O = XMP + diphosphate + H(+). Its function is as follows. Pyrophosphatase that hydrolyzes non-canonical purine nucleotides such as inosine triphosphate (ITP), deoxyinosine triphosphate (dITP) or xanthosine 5'-triphosphate (XTP) to their respective monophosphate derivatives. The enzyme does not distinguish between the deoxy- and ribose forms. Probably excludes non-canonical purines from RNA and DNA precursor pools, thus preventing their incorporation into RNA and DNA and avoiding chromosomal lesions. This chain is Inosine triphosphate pyrophosphatase 1, found in Trypanosoma cruzi (strain CL Brener).